Consider the following 142-residue polypeptide: Peptide methionine sulfoxide reductase MsrB (142 aa).

The 123-residue stretch at 10–132 folds into the MsrB domain; that stretch reads EEEWKKVLTP…NSVSLNFKTE (123 aa). Positions 49, 52, 98, and 101 each coordinate Zn(2+). Catalysis depends on C121, which acts as the Nucleophile.

It belongs to the MsrB Met sulfoxide reductase family. The cofactor is Zn(2+).

It catalyses the reaction L-methionyl-[protein] + [thioredoxin]-disulfide + H2O = L-methionyl-(R)-S-oxide-[protein] + [thioredoxin]-dithiol. The protein is Peptide methionine sulfoxide reductase MsrB of Methanosarcina barkeri (strain Fusaro / DSM 804).